Reading from the N-terminus, the 652-residue chain is Transmembrane 9 superfamily member 12 (652 aa).

An N-terminal signal peptide occupies residues 1–20 (MFGVYRVFVLLVFVSQLCNG). Residues 21–286 (FYLPGSYMHT…LKMEGARVHW (266 aa)) are Lumenal-facing. Residues 287–307 (FSILNSLMVIFFLAGIVFVIF) form a helical membrane-spanning segment. Over 308 to 362 (LRTVRRDLTKYEELDKEAQAQMNEELSGWKLVVGDVFREPEMSKLLCIMVGDGVR) the chain is Cytoplasmic. The chain crosses the membrane as a helical span at residues 363–383 (ITGMAVVTIVFAALGFMSPAS). Residues 384–386 (RGM) lie on the Lumenal side of the membrane. The helical transmembrane segment at 387–407 (LLTGMIILYLFLGIVAGYAGV) threads the bilayer. Residues 408 to 426 (RLWRTVKGTSEGWRSLSWS) are Cytoplasmic-facing. A helical membrane pass occupies residues 427 to 447 (IACFFPGIAFVILTVLNFLLW). Residues 448-460 (SSNSTGAIPISLY) lie on the Lumenal side of the membrane. A helical membrane pass occupies residues 461–481 (FELLALWFCISVPLTLFGGFL). At 482–510 (GTRAEAIQFPVRTNQIPREIPERKYPSWL) the chain is on the cytoplasmic side. Residues 511–531 (LVLGAGTLPFGTLFIELFFIF) traverse the membrane as a helical segment. The Lumenal segment spans residues 532 to 541 (SSIWLGRFYY). The chain crosses the membrane as a helical span at residues 542–562 (VFGFLLIVLLLLVVVCAEVSV). Over 563–580 (VLTYMHLCVEDWRWWWKA) the chain is Cytoplasmic. A helical transmembrane segment spans residues 581-601 (FYASGSVALYVFAYSINYLVF). Over 602-613 (DLQSLSGPVSAM) the chain is Lumenal. A helical transmembrane segment spans residues 614–634 (LYIGYSLLMAIAIMLATGTIG). Topologically, residues 635 to 652 (FLTSFYFVHYLFSSVKID) are cytoplasmic. The Endoplasmic reticulum export signal signature appears at 641–646 (FVHYLF). Positions 650-652 (KID) match the Golgi retention signal motif.

Belongs to the nonaspanin (TM9SF) (TC 9.A.2) family.

It localises to the endosome membrane. Its subcellular location is the golgi apparatus membrane. This chain is Transmembrane 9 superfamily member 12, found in Arabidopsis thaliana (Mouse-ear cress).